A 547-amino-acid polypeptide reads, in one-letter code: Sensor histidine kinase CitA (547 aa).

The Cytoplasmic portion of the chain corresponds to 1–23 (MSIYPMYTRKITHWFARRSFQNR). A helical membrane pass occupies residues 24 to 44 (IFLLILFTSTIVMLAMSWYLT). Residues 45–180 (DITEERLHYQ…TIEQLENWLS (136 aa)) are Periplasmic-facing. The citrate site is built by Arg-109, His-112, Arg-150, and Lys-152. Residues 181–201 (LQISSLLIPMAIMLLLLLFCA) traverse the membrane as a helical segment. The Cytoplasmic segment spans residues 202–547 (RRFSLHIKKQ…IPLTRDEHHG (346 aa)). In terms of domain architecture, PAS spans 225-264 (IQQSVLFESVFEGLIAIDSDYKITAINQTARRLLNLSQPE). Residues 347-542 (AVQHEHRNLI…IFTLYIPLTR (196 aa)) form the Histidine kinase domain. Phosphohistidine; by autocatalysis is present on His-350.

As to quaternary structure, homodimer. In vitro CitB and the CitA kinase domain form a complex, formation of which is enhanced by ATP. Post-translationally, autophosphorylated.

Its subcellular location is the cell inner membrane. It carries out the reaction ATP + protein L-histidine = ADP + protein N-phospho-L-histidine.. Its function is as follows. Member of the two-component regulatory system CitA/CitB. Probably activates CitB by phosphorylation. The periplasmic domain binds H-citrate(2-), which is essential for induction of the citrate-fermentation genes. The polypeptide is Sensor histidine kinase CitA (citA) (Klebsiella pneumoniae).